A 505-amino-acid polypeptide reads, in one-letter code: Aminoaldehyde dehydrogenase 1a (505 aa).

Na(+) is bound at residue Asp-101. Residues 161–163 (TPW) and 187–190 (KPSE) each bind NAD(+). Leu-191 is a binding site for Na(+). NAD(+) contacts are provided by residues 241–244 (SFET) and Glu-262. The Proton acceptor role is filled by Glu-262. Cys-296 acts as the Nucleophile in catalysis. Positions 395 and 461 each coordinate NAD(+).

The protein belongs to the aldehyde dehydrogenase family. As to quaternary structure, forms homodimers.

The catalysed reaction is 4-aminobutanal + NAD(+) + H2O = 4-aminobutanoate + NADH + 2 H(+). The enzyme catalyses 3-aminopropanal + NAD(+) + H2O = beta-alanine + NADH + 2 H(+). It catalyses the reaction 4-(trimethylamino)butanal + NAD(+) + H2O = 4-(trimethylamino)butanoate + NADH + 2 H(+). It carries out the reaction 4-guanidinobutanal + NAD(+) + H2O = 4-guanidinobutanoate + NADH + 2 H(+). The catalysed reaction is betaine aldehyde + NAD(+) + H2O = glycine betaine + NADH + 2 H(+). It functions in the pathway amine and polyamine biosynthesis; betaine biosynthesis via choline pathway; betaine from betaine aldehyde: step 1/1. Its function is as follows. Dehydrogenase that catalyzes the oxidation of several aminoaldehydes. Metabolizes and detoxifies aldehyde products of polyamine degradation to non-toxic amino acids. Catalyzes the oxidation of 4-aminobutanal and 3-aminopropanal to 4-aminobutanoate and beta-alanine, respectively. Catalyzes the oxidation of 4-(trimethylamino)butanal and 4-guanidinobutanal to 4-trimethylammoniobutanoate and 4-guanidinobutanoate, respectively. Catalyzes the oxidation of betaine aldehyde to glycine betaine. Functionally, dehydrogenase that catalyzes the oxidation of several aminoaldehydes. Catalyzes the oxidation of betaine aldehyde to glycine betaine. Catalyzes the oxidation of 4-(trimethylamino)butanal to 4-trimethylammoniobutanoate. This chain is Aminoaldehyde dehydrogenase 1a, found in Zea mays (Maize).